The chain runs to 134 residues: uncharacterized protein (134 aa).

This is an uncharacterized protein from Acanthamoeba polyphaga (Amoeba).